The following is a 395-amino-acid chain: E3 ubiquitin-protein ligase RNFT1 (395 aa).

Disordered regions lie at residues 1–58 (MQAS…SSRN) and 78–97 (YSHS…GEHG). The next 6 helical transmembrane spans lie at 118 to 138 (ILIL…LGIG), 165 to 185 (CAWL…TFHS), 193 to 213 (IFLN…IVGI), 216 to 236 (FILK…PSFI), 258 to 278 (IFVP…FGNV), and 283 to 303 (LGIL…FGHL). Residues 328 to 379 (CSDMDGICTICQAEFQKPVLLFCQHIFCEECITLWFNREKTCPLCRTVISEC) are required for ubiquitin ligase activity and for protection against ER stress-induced cell death. Residues 335 to 373 (CTICQAEFQKPVLLFCQHIFCEECITLWFNREKTCPLCR) form an RING-type zinc finger.

As to expression, predominantly expressed in testis.

The protein resides in the early endosome membrane. It carries out the reaction S-ubiquitinyl-[E2 ubiquitin-conjugating enzyme]-L-cysteine + [acceptor protein]-L-lysine = [E2 ubiquitin-conjugating enzyme]-L-cysteine + N(6)-ubiquitinyl-[acceptor protein]-L-lysine.. Its pathway is protein modification; protein ubiquitination. Functionally, E3 ubiquitin-protein ligase that acts in the endoplasmic reticulum (ER)-associated degradation (ERAD) pathway, which targets misfolded proteins that accumulate in the endoplasmic reticulum (ER) for ubiquitination and subsequent proteasome-mediated degradation. Protects cells from ER stress-induced apoptosis. This Mus musculus (Mouse) protein is E3 ubiquitin-protein ligase RNFT1 (Rnft1).